Reading from the N-terminus, the 130-residue chain is Small ribosomal subunit protein uS9 (130 aa).

Belongs to the universal ribosomal protein uS9 family.

The protein is Small ribosomal subunit protein uS9 of Bordetella avium (strain 197N).